A 250-amino-acid polypeptide reads, in one-letter code: Expansin-like B1 (250 aa).

Positions 1–24 are cleaved as a signal peptide; it reads MKHSHVLLLLFVQVIVLLPLLCLS. The 105-residue stretch at 45–149 folds into the Expansin-like EG45 domain; that stretch reads RGHCGYGEFG…QRIPCRYAGY (105 aa). Asn-72 is a glycosylation site (N-linked (GlcNAc...) asparagine). The 83-residue stretch at 163 to 245 folds into the Expansin-like CBD domain; the sequence is HYLAILVLYV…DWTAGATYDS (83 aa).

This sequence belongs to the expansin family. Expansin-like B subfamily.

It localises to the secreted. The protein is Expansin-like B1 (EXLB1) of Arabidopsis thaliana (Mouse-ear cress).